We begin with the raw amino-acid sequence, 460 residues long: Bifunctional protein GlmU (460 aa).

The interval 1-229 (MSNYAIILAA…FEESLGVNDR (229 aa)) is pyrophosphorylase. UDP-N-acetyl-alpha-D-glucosamine-binding positions include 8-11 (LAAG), K22, Q72, and 77-78 (GT). Residue D102 coordinates Mg(2+). Residues G139, E154, N169, and N227 each contribute to the UDP-N-acetyl-alpha-D-glucosamine site. N227 is a Mg(2+) binding site. The linker stretch occupies residues 230–250 (VALATAEDVMRRRINKTHMIN). Residues 251–460 (GVTFQNPNAT…KKPHHPSQQK (210 aa)) are N-acetyltransferase. 2 residues coordinate UDP-N-acetyl-alpha-D-glucosamine: R332 and K350. H362 (proton acceptor) is an active-site residue. Positions 365 and 376 each coordinate UDP-N-acetyl-alpha-D-glucosamine. Residues A379, 385–386 (NY), S404, A422, and R439 contribute to the acetyl-CoA site.

It in the N-terminal section; belongs to the N-acetylglucosamine-1-phosphate uridyltransferase family. In the C-terminal section; belongs to the transferase hexapeptide repeat family. In terms of assembly, homotrimer. Mg(2+) serves as cofactor.

It localises to the cytoplasm. The enzyme catalyses alpha-D-glucosamine 1-phosphate + acetyl-CoA = N-acetyl-alpha-D-glucosamine 1-phosphate + CoA + H(+). It catalyses the reaction N-acetyl-alpha-D-glucosamine 1-phosphate + UTP + H(+) = UDP-N-acetyl-alpha-D-glucosamine + diphosphate. Its pathway is nucleotide-sugar biosynthesis; UDP-N-acetyl-alpha-D-glucosamine biosynthesis; N-acetyl-alpha-D-glucosamine 1-phosphate from alpha-D-glucosamine 6-phosphate (route II): step 2/2. It functions in the pathway nucleotide-sugar biosynthesis; UDP-N-acetyl-alpha-D-glucosamine biosynthesis; UDP-N-acetyl-alpha-D-glucosamine from N-acetyl-alpha-D-glucosamine 1-phosphate: step 1/1. The protein operates within bacterial outer membrane biogenesis; LPS lipid A biosynthesis. In terms of biological role, catalyzes the last two sequential reactions in the de novo biosynthetic pathway for UDP-N-acetylglucosamine (UDP-GlcNAc). The C-terminal domain catalyzes the transfer of acetyl group from acetyl coenzyme A to glucosamine-1-phosphate (GlcN-1-P) to produce N-acetylglucosamine-1-phosphate (GlcNAc-1-P), which is converted into UDP-GlcNAc by the transfer of uridine 5-monophosphate (from uridine 5-triphosphate), a reaction catalyzed by the N-terminal domain. This chain is Bifunctional protein GlmU, found in Streptococcus thermophilus (strain ATCC BAA-491 / LMD-9).